We begin with the raw amino-acid sequence, 581 residues long: Proline--tRNA ligase (581 aa).

This sequence belongs to the class-II aminoacyl-tRNA synthetase family. ProS type 1 subfamily. Homodimer.

Its subcellular location is the cytoplasm. It carries out the reaction tRNA(Pro) + L-proline + ATP = L-prolyl-tRNA(Pro) + AMP + diphosphate. In terms of biological role, catalyzes the attachment of proline to tRNA(Pro) in a two-step reaction: proline is first activated by ATP to form Pro-AMP and then transferred to the acceptor end of tRNA(Pro). As ProRS can inadvertently accommodate and process non-cognate amino acids such as alanine and cysteine, to avoid such errors it has two additional distinct editing activities against alanine. One activity is designated as 'pretransfer' editing and involves the tRNA(Pro)-independent hydrolysis of activated Ala-AMP. The other activity is designated 'posttransfer' editing and involves deacylation of mischarged Ala-tRNA(Pro). The misacylated Cys-tRNA(Pro) is not edited by ProRS. The chain is Proline--tRNA ligase from Chlamydia trachomatis serovar D (strain ATCC VR-885 / DSM 19411 / UW-3/Cx).